The primary structure comprises 424 residues: Cuticlin-1 (424 aa).

Residues 1–18 (MTWKPIICLAALVLSASA) form the signal peptide. The Extracellular portion of the chain corresponds to 19–392 (IPVDNNVEGE…ATSTGICLTP (374 aa)). The 246-residue stretch at 32-277 (ECGPNSITVN…PTCSEPQGFG (246 aa)) folds into the ZP domain. A disulfide bridge links C197 with C252. A run of 4 repeats spans residues 302-305 (AAPV), 307-311 (AAAPV), 312-315 (AAPV), and 320-323 (AAPA). The segment at 302 to 323 (AAPVAAAAPVAAPVAAAAAAPA) is 4 X 4 AA repeats of A-A-P-[AVI]. Residues 393–413 (IGFASFLGIGTIVATALSATI) traverse the membrane as a helical segment. The Cytoplasmic segment spans residues 414 to 424 (FYVARPTSHKH).

It is found in the cell membrane. The protein localises to the secreted. Its function is as follows. Component of the cuticles, which contributes to the formation of extracellular envelopes protecting the organism from the environment. Plays a role in alae formation in dauer larvae. The chain is Cuticlin-1 from Caenorhabditis elegans.